Here is a 362-residue protein sequence, read N- to C-terminus: Transcription factor bHLH133 (362 aa).

One can recognise a bHLH domain in the interval 209–258 (LQVPSSQSTLKVRKEKLGGRIASLHQLVSPFGKTDTASVLSEAIGYIRFL).

This sequence belongs to the bHLH protein family. As to quaternary structure, homodimer.

It is found in the nucleus. The sequence is that of Transcription factor bHLH133 (BHLH133) from Arabidopsis thaliana (Mouse-ear cress).